The primary structure comprises 427 residues: L-threonine dehydratase biosynthetic IlvA (427 aa).

N6-(pyridoxal phosphate)lysine is present on lysine 63. Residues asparagine 90, 193–197, and serine 319 contribute to the pyridoxal 5'-phosphate site; that span reads GGGGC. One can recognise an ACT-like domain in the interval 343 to 417; sequence HYFLVDFPQK…TEMHVETLQP (75 aa).

It belongs to the serine/threonine dehydratase family. Homotetramer. Pyridoxal 5'-phosphate is required as a cofactor.

The catalysed reaction is L-threonine = 2-oxobutanoate + NH4(+). It participates in amino-acid biosynthesis; L-isoleucine biosynthesis; 2-oxobutanoate from L-threonine: step 1/1. In terms of biological role, catalyzes the anaerobic formation of alpha-ketobutyrate and ammonia from threonine in a two-step reaction. The first step involved a dehydration of threonine and a production of enamine intermediates (aminocrotonate), which tautomerizes to its imine form (iminobutyrate). Both intermediates are unstable and short-lived. The second step is the nonenzymatic hydrolysis of the enamine/imine intermediates to form 2-ketobutyrate and free ammonia. In the low water environment of the cell, the second step is accelerated by RidA. The protein is L-threonine dehydratase biosynthetic IlvA (ilvA) of Mycobacterium leprae (strain TN).